The primary structure comprises 606 residues: Zinc finger protein 214 (606 aa).

A KRAB domain is found at 3 to 83 (VTFEDVTIIF…GAQMYENQNY (81 aa)). The C2H2-type 1; degenerate zinc finger occupies 275-297 (YGCDEVDGNFHQSSGVHFHQRVH). The C2H2-type 2 zinc-finger motif lies at 303 to 325 (YSCNACGKSFSQISSLHNHQRVH). Residues 330-352 (FYKIECDKDLSRNSLLHIHQRLH) form a C2H2-type 3; degenerate zinc finger. 8 consecutive C2H2-type zinc fingers follow at residues 358-380 (FKCN…QRVH), 386-408 (YKCD…QLVH), 414-436 (YKCE…QRVH), 442-464 (YKCD…QRVH), 470-492 (YTCP…QRVH), 498-520 (YKCE…QRVH), 526-548 (YKCH…QRVH), and 554-576 (YQCA…QRVH).

It belongs to the krueppel C2H2-type zinc-finger protein family.

Its subcellular location is the nucleus. In terms of biological role, may be involved in transcriptional regulation. The polypeptide is Zinc finger protein 214 (ZNF214) (Homo sapiens (Human)).